Reading from the N-terminus, the 191-residue chain is Cathelicidin-related peptide Oh-Cath (191 aa).

Residues 1–22 form the signal peptide; the sequence is MEGFFWKTLLVVGALAIGGTSS. The propeptide occupies 23–161; that stretch reads LPHKPLTYEE…DQPRRVKRFK (139 aa). Intrachain disulfides connect cysteine 81/cysteine 92 and cysteine 103/cysteine 120. Acidic residues predominate over residues 125–151; that stretch reads EEEEQKQEEGNEEEKEVEKEEKEEDEK. The disordered stretch occupies residues 125 to 154; it reads EEEEQKQEEGNEEEKEVEKEEKEEDEKDQP.

This sequence belongs to the cathelicidin family. Expressed by the venom gland.

It localises to the secreted. It is found in the target cell membrane. Functionally, potent antimicrobial peptide against Gram-negative (MIC=0.25 ug/ml against E.coli ATCC 25922, MIC=0.5 ug/ml against P.aeruginosa) and Gram-positive bacteria (MIC=64 ug/ml against E.faecalis, MIC=64 ug/ml against S.aureus). Adopts an amphipathic alpha helical conformation, that may allow to partition into the target membrane. Low hemolytic activities have been observed on mammalian cells. This is Cathelicidin-related peptide Oh-Cath from Ophiophagus hannah (King cobra).